Consider the following 430-residue polypeptide: Glutamate-1-semialdehyde 2,1-aminomutase (430 aa).

N6-(pyridoxal phosphate)lysine is present on Lys-265.

Belongs to the class-III pyridoxal-phosphate-dependent aminotransferase family. HemL subfamily. Homodimer. Pyridoxal 5'-phosphate is required as a cofactor.

It localises to the cytoplasm. The catalysed reaction is (S)-4-amino-5-oxopentanoate = 5-aminolevulinate. It functions in the pathway porphyrin-containing compound metabolism; protoporphyrin-IX biosynthesis; 5-aminolevulinate from L-glutamyl-tRNA(Glu): step 2/2. This is Glutamate-1-semialdehyde 2,1-aminomutase (hemL) from Helicobacter pylori (strain J99 / ATCC 700824) (Campylobacter pylori J99).